The chain runs to 1216 residues: MPLSSHLLPALVLFLAGSSGWAWVPNHCRSPGQAVCNFVCDCRDCSDEAQCGYHGASPTLGAPFACDFEQDPCGWRDISTSGYSWLRDRAGAALEGPGPHSDHTLGTDLGWYMAVGTHRGKEASTAALRSPTLREAASSCKLRLWYHAASGDVAELRVELTHGAETLTLWQSTGPWGPGWQELAVTTGRIRGDFRVTFSATRNATHRGAVALDDLEFWDCGLPTPQANCPPGHHHCQNKVCVEPQQLCDGEDNCGDLSDENPLTCGRHIATDFETGLGPWNRSEGWSRNHRAGGPERPSWPRRDHSRNSAQGSFLVSVAEPGTPAILSSPEFQASGTSNCSLVFYQYLSGSEAGCLQLFLQTLGPGAPRAPVLLRRRRGELGTAWVRDRVDIQSAYPFQILLAGQTGPGGVVGLDDLILSDHCRPVSEVSTLQPLPPGPRAPAPQPLPPSSRLQDSCKQGHLACGDLCVPPEQLCDFEEQCAGGEDEQACGTTDFESPEAGGWEDASVGRLQWRRVSAQESQGSSAAAAGHFLSLQRAWGQLGAEARVLTPLLGPSGPSCELHLAYYLQSQPRGFLALVVVDNGSRELAWQALSSSAGIWKVDKVLLGARRRPFRLEFVGLVDLDGPDQQGAGVDNVTLRDCSPTVTTERDREVSCNFERDTCSWYPGHLSDTHWRWVESRGPDHDHTTGQGHFVLLDPTDPLAWGHSAHLLSRPQVPAAPTECLSFWYHLHGPQIGTLRLAMRREGEETHLWSRSGTQGNRWHEAWATLSHQPGSHAQYQLLFEGLRDGYHGTMALDDVAVRPGPCWAPNYCSFEDSDCGFSPGGQGLWRRQANASGHAAWGPPTDHTTETAQGHYMVVDTSPDALPRGQTASLTSKEHRPLAQPACLTFWYHGSLRSPGTLRVYLEERGRHQVLSLSAHGGLAWRLGSMDVQAERAWRVVFEAVAAGVAHSYVALDDLLLQDGPCPQPGSCDFESGLCGWSHLAWPGLGGYSWDWGGGATPSRYPQPPVDHTLGTEAGHFAFFETGVLGPGGRAAWLRSEPLPATPASCLRFWYHMGFPEHFYKGELKVLLHSAQGQLAVWGAGGHRRHQWLEAQVEVASAKEFQIVFEATLGGQPALGPIALDDVEYLAGQHCQQPAPSPGNTAAPGSVPAVVGSALLLLMLLVLLGLGGRRWLQKKGSCPFQSNTEATAPGFDNILFNADGVTLPASVTSDP.

The N-terminal stretch at 1 to 22 (MPLSSHLLPALVLFLAGSSGWA) is a signal peptide. The Extracellular segment spans residues 23–1151 (WVPNHCRSPG…SPGNTAAPGS (1129 aa)). The 28-residue stretch at 26 to 53 (NHCRSPGQAVCNFVCDCRDCSDEAQCGY) folds into the LDL-receptor class A 1; truncated domain. Positions 64–222 (FACDFEQDPC…DDLEFWDCGL (159 aa)) constitute an MAM 1 domain. The N-linked (GlcNAc...) asparagine glycan is linked to asparagine 203. The region spanning 228–266 (NCPPGHHHCQNKVCVEPQQLCDGEDNCGDLSDENPLTCG) is the LDL-receptor class A 2 domain. Disulfide bonds link cysteine 229-cysteine 241, cysteine 236-cysteine 254, and cysteine 248-cysteine 265. An MAM 2 domain is found at 269 to 425 (IATDFETGLG…DLILSDHCRP (157 aa)). Residues 280–307 (WNRSEGWSRNHRAGGPERPSWPRRDHSR) are disordered. Residues asparagine 281 and asparagine 339 are each glycosylated (N-linked (GlcNAc...) asparagine). Positions 429–455 (VSTLQPLPPGPRAPAPQPLPPSSRLQD) are disordered. The segment covering 434–449 (PLPPGPRAPAPQPLPP) has biased composition (pro residues). The LDL-receptor class A 3 domain occupies 456-491 (SCKQGHLACGDLCVPPEQLCDFEEQCAGGEDEQACG). 3 disulfides stabilise this stretch: cysteine 457–cysteine 468, cysteine 464–cysteine 481, and cysteine 475–cysteine 490. MAM domains lie at 491-644 (GTTD…DCSP), 654-809 (VSCN…PCWA), 811-969 (NYCS…PCPQ), and 971-1138 (GSCD…HCQQ). N-linked (GlcNAc...) asparagine glycosylation is found at asparagine 583 and asparagine 636. N-linked (GlcNAc...) asparagine glycosylation is present at asparagine 835. The chain crosses the membrane as a helical span at residues 1152 to 1172 (VPAVVGSALLLLMLLVLLGLG). Residues 1173-1216 (GRRWLQKKGSCPFQSNTEATAPGFDNILFNADGVTLPASVTSDP) lie on the Cytoplasmic side of the membrane.

It localises to the membrane. Functionally, probably involved in the sorting and selective transport of receptors and ligands across polarized epithelia. In Homo sapiens (Human), this protein is Apical endosomal glycoprotein.